The chain runs to 433 residues: L-saccharopine oxidase (433 aa).

The first 18 residues, 1–18, serve as a signal peptide directing secretion; it reads MSRTIVIVGCGVFGLSTA. N-linked (GlcNAc...) asparagine glycans are attached at residues Asn24, Asn119, Asn188, and Asn229.

Belongs to the MSOX/MTOX family. As to quaternary structure, monomer. It depends on FAD as a cofactor.

The protein resides in the secreted. Its subcellular location is the cytoplasm. It is found in the nucleus. The catalysed reaction is L-saccharopine + O2 + H2O = (S)-2-amino-6-oxohexanoate + L-glutamate + H2O2. The polypeptide is L-saccharopine oxidase (Schizosaccharomyces pombe (strain 972 / ATCC 24843) (Fission yeast)).